Here is a 1914-residue protein sequence, read N- to C-terminus: Autophagy-related protein 2 homolog A (1914 aa).

Residues 14 to 112 (ERVCRYLLQH…LTLQPRQGSG (99 aa)) form the Chorein N-terminal domain. Phosphoserine is present on residues Ser764, Ser869, Ser875, and Ser877. Positions 1222–1243 (DLHPPPRPPSPTEIAGQKLSES) are disordered. 3 positions are modified to phosphoserine: Ser1246, Ser1282, and Ser1290. A disordered region spans residues 1299–1337 (GERSGAQAPLPPPGASSHTLGSKAKEHENEEEGDGDTLD). Positions 1327-1337 (NEEEGDGDTLD) are enriched in acidic residues. The segment at 1337–1383 (DSDEFCILDAPGLGIAPRDGEPIVTQLHPGPIIVHDGHFSQPLGSTD) is WIPI-interacting. A Phosphoserine modification is found at Ser1381. 3 disordered regions span residues 1427 to 1452 (LTGP…TQGG), 1589 to 1634 (MVPG…SSSD), and 1803 to 1822 (RSLQ…QPAD). Low complexity predominate over residues 1429 to 1446 (GPRVSPSRSSGPNRPQNS).

The protein belongs to the ATG2 family. In terms of assembly, interacts with ATG9A (via C-terminus). Interacts with TMEM41B. Interacts with VMP1.

The protein localises to the preautophagosomal structure membrane. Its subcellular location is the lipid droplet. It is found in the endoplasmic reticulum membrane. The catalysed reaction is a 1,2-diacyl-sn-glycero-3-phospho-L-serine(in) = a 1,2-diacyl-sn-glycero-3-phospho-L-serine(out). It carries out the reaction a 1,2-diacyl-sn-glycero-3-phosphoethanolamine(in) = a 1,2-diacyl-sn-glycero-3-phosphoethanolamine(out). In terms of biological role, lipid transfer protein involved in autophagosome assembly. Tethers the edge of the isolation membrane (IM) to the endoplasmic reticulum (ER) and mediates direct lipid transfer from ER to IM for IM expansion. Binds to the ER exit site (ERES), which is the membrane source for autophagosome formation, and extracts phospholipids from the membrane source and transfers them to ATG9 (ATG9A or ATG9B) to the IM for membrane expansion. Lipid transfer activity is enhanced by WIPI1 and WDR45/WIPI4, which promote ATG2A-association with phosphatidylinositol 3-monophosphate (PI3P)-containing membranes. Also regulates lipid droplets morphology and distribution within the cell. Functionally, (Microbial infection) Mediates the intracellular lifestyle of Cryptococcus neoformans by supporting infection. In Mus musculus (Mouse), this protein is Autophagy-related protein 2 homolog A.